The sequence spans 348 residues: Galanin receptor type 1 (348 aa).

Over Met-1–Phe-34 the chain is Extracellular. Residues Asn-7 and Asn-12 are each glycosylated (N-linked (GlcNAc...) asparagine). A helical transmembrane segment spans residues Ile-35–Ile-55. Over Thr-56–Thr-70 the chain is Cytoplasmic. A helical membrane pass occupies residues Asn-71–Phe-91. The Extracellular portion of the chain corresponds to Gln-92 to Lys-109. Cys-108 and Cys-186 form a disulfide bridge. Residues Phe-110–Val-131 form a helical membrane-spanning segment. Over Asp-132–Asn-151 the chain is Cytoplasmic. Residues Ala-152–Tyr-172 traverse the membrane as a helical segment. Residues His-173–Lys-197 lie on the Extracellular side of the membrane. Residue Asn-182 is glycosylated (N-linked (GlcNAc...) asparagine). Residues Ala-198–Cys-218 form a helical membrane-spanning segment. The Cytoplasmic portion of the chain corresponds to Tyr-219–Thr-247. A helical membrane pass occupies residues Val-248–Trp-268. The Extracellular segment spans residues Ala-269 to Glu-270. A helical membrane pass occupies residues Phe-271–Ala-291. Topologically, residues Tyr-292–Val-348 are cytoplasmic. Cys-319 carries the S-palmitoyl cysteine lipid modification. Residues Ser-328–Met-337 are compositionally biased toward basic and acidic residues. The segment at Ser-328–Val-348 is disordered.

It belongs to the G-protein coupled receptor 1 family. In terms of assembly, interacts with GRP39 AND HTR1A. Three cysteine residues are found in the C-terminus, at least one of which may be palmitoylated. As to expression, expression is detected in brain, spinal cord, heart and skeletal muscle.

Its subcellular location is the cell membrane. In terms of biological role, receptor for the hormone galanin. The activity of this receptor is mediated by G proteins that inhibit adenylate cyclase activity. This Mus musculus (Mouse) protein is Galanin receptor type 1 (Galr1).